A 443-amino-acid chain; its full sequence is Probable glycine dehydrogenase (decarboxylating) subunit 1 (443 aa).

Belongs to the GcvP family. N-terminal subunit subfamily. The glycine cleavage system is composed of four proteins: P, T, L and H. In this organism, the P 'protein' is a heterodimer of two subunits.

The catalysed reaction is N(6)-[(R)-lipoyl]-L-lysyl-[glycine-cleavage complex H protein] + glycine + H(+) = N(6)-[(R)-S(8)-aminomethyldihydrolipoyl]-L-lysyl-[glycine-cleavage complex H protein] + CO2. Functionally, the glycine cleavage system catalyzes the degradation of glycine. The P protein binds the alpha-amino group of glycine through its pyridoxal phosphate cofactor; CO(2) is released and the remaining methylamine moiety is then transferred to the lipoamide cofactor of the H protein. The sequence is that of Probable glycine dehydrogenase (decarboxylating) subunit 1 from Solidesulfovibrio magneticus (strain ATCC 700980 / DSM 13731 / RS-1) (Desulfovibrio magneticus).